The chain runs to 463 residues: MQKQKQELHRGLEERHISLMSLGAAIGVGLFLGSASAIQLAGPGILVAYAASGLVMFFIMRALGEMAIQKPVAGSFSRYARDYLGPLAGYLTGWNYWFLWVVTCMAEITAVGIYMGFWFPDVPNWIWALSALVIMTGVNFLAVKAYGELEFWFALIKIVAILSMIAVGLLMIIAGVGNGGIATGISNLWNNGGFFPHGLKGVLLSLQMVMFAYLGIEMIGVTAGEVKNPQKSLAKAIDTVFWRILIFYVGALFVIMSIYPWQEIGSQGSPFVLTFQKVGIPSAAGIINFVVLTAALSSCNSGIFSTGRMLFNLAEQKEAPQAYGQLTKGGIPGKAVLASAGALLVGVLLNYVVPAKVFTWVTSIATFGAIWTWAIILLSQIKYRKSLKPEEKKQLKYKMPLFPFTSYVSLAFLAFVVILMAYSPDTRVAVIIGPIWFLILLAVYYGKGFHKKNAAAASERNIS.

Helical transmembrane passes span 17-37 (ISLM…SASA), 40-60 (LAGP…FFIM), 97-117 (WFLW…YMGF), 122-142 (VPNW…NFLA), 153-173 (FALI…LMII), 201-221 (GVLL…MIGV), 244-264 (ILIF…WQEI), 278-298 (VGIP…ALSS), 335-355 (AVLA…VVPA), 357-377 (VFTW…AIIL), 401-421 (LFPF…ILMA), and 429-449 (AVII…GKGF).

The protein belongs to the amino acid-polyamine-organocation (APC) superfamily.

It localises to the cell membrane. This is an uncharacterized protein from Bacillus subtilis (strain 168).